The sequence spans 251 residues: Imidazole glycerol phosphate synthase subunit HisF (251 aa).

Residues D11 and D130 contribute to the active site.

This sequence belongs to the HisA/HisF family. As to quaternary structure, heterodimer of HisH and HisF.

Its subcellular location is the cytoplasm. It catalyses the reaction 5-[(5-phospho-1-deoxy-D-ribulos-1-ylimino)methylamino]-1-(5-phospho-beta-D-ribosyl)imidazole-4-carboxamide + L-glutamine = D-erythro-1-(imidazol-4-yl)glycerol 3-phosphate + 5-amino-1-(5-phospho-beta-D-ribosyl)imidazole-4-carboxamide + L-glutamate + H(+). It functions in the pathway amino-acid biosynthesis; L-histidine biosynthesis; L-histidine from 5-phospho-alpha-D-ribose 1-diphosphate: step 5/9. Its function is as follows. IGPS catalyzes the conversion of PRFAR and glutamine to IGP, AICAR and glutamate. The HisF subunit catalyzes the cyclization activity that produces IGP and AICAR from PRFAR using the ammonia provided by the HisH subunit. The protein is Imidazole glycerol phosphate synthase subunit HisF of Pelodictyon phaeoclathratiforme (strain DSM 5477 / BU-1).